A 158-amino-acid chain; its full sequence is 3-dehydroquinate dehydratase (158 aa).

Y22 (proton acceptor) is an active-site residue. Substrate is bound by residues N74, H80, and D87. Residue H100 is the Proton donor of the active site. Residues 101 to 102 and R111 contribute to the substrate site; that span reads IS.

This sequence belongs to the type-II 3-dehydroquinase family. In terms of assembly, homododecamer.

The enzyme catalyses 3-dehydroquinate = 3-dehydroshikimate + H2O. It participates in metabolic intermediate biosynthesis; chorismate biosynthesis; chorismate from D-erythrose 4-phosphate and phosphoenolpyruvate: step 3/7. Its function is as follows. Catalyzes a trans-dehydration via an enolate intermediate. This chain is 3-dehydroquinate dehydratase, found in Helicobacter hepaticus (strain ATCC 51449 / 3B1).